Here is a 207-residue protein sequence, read N- to C-terminus: High frequency lysogenization protein HflD homolog (207 aa).

It belongs to the HflD family.

Its subcellular location is the cytoplasm. It localises to the cell inner membrane. This Pseudomonas fluorescens (strain ATCC BAA-477 / NRRL B-23932 / Pf-5) protein is High frequency lysogenization protein HflD homolog.